Consider the following 219-residue polypeptide: Ribose-5-phosphate isomerase A (219 aa).

Substrate is bound by residues 28–31 (TGST), 81–84 (DGAD), and 94–97 (KGGG). Glu-103 acts as the Proton acceptor in catalysis. Lys-121 lines the substrate pocket.

It belongs to the ribose 5-phosphate isomerase family. As to quaternary structure, homodimer.

It carries out the reaction aldehydo-D-ribose 5-phosphate = D-ribulose 5-phosphate. It functions in the pathway carbohydrate degradation; pentose phosphate pathway; D-ribose 5-phosphate from D-ribulose 5-phosphate (non-oxidative stage): step 1/1. In terms of biological role, catalyzes the reversible conversion of ribose-5-phosphate to ribulose 5-phosphate. This chain is Ribose-5-phosphate isomerase A, found in Photorhabdus laumondii subsp. laumondii (strain DSM 15139 / CIP 105565 / TT01) (Photorhabdus luminescens subsp. laumondii).